The sequence spans 411 residues: Peptidase T (411 aa).

Residue His78 participates in Zn(2+) binding. The active site involves Asp80. Residue Asp140 coordinates Zn(2+). The Proton acceptor role is filled by Glu173. Positions 174, 196, and 379 each coordinate Zn(2+).

The protein belongs to the peptidase M20B family. The cofactor is Zn(2+).

It localises to the cytoplasm. It carries out the reaction Release of the N-terminal residue from a tripeptide.. Functionally, cleaves the N-terminal amino acid of tripeptides. The chain is Peptidase T from Yersinia pseudotuberculosis serotype O:1b (strain IP 31758).